A 303-amino-acid chain; its full sequence is Acetaldehyde dehydrogenase (303 aa).

C130 functions as the Acyl-thioester intermediate in the catalytic mechanism. NAD(+) contacts are provided by residues 161-169 and N272; that span reads SVGPGTRKN.

Belongs to the acetaldehyde dehydrogenase family.

It catalyses the reaction acetaldehyde + NAD(+) + CoA = acetyl-CoA + NADH + H(+). The polypeptide is Acetaldehyde dehydrogenase (Verminephrobacter eiseniae (strain EF01-2)).